We begin with the raw amino-acid sequence, 370 residues long: Dual-specificity RNA methyltransferase RlmN (370 aa).

Glutamate 93 serves as the catalytic Proton acceptor. One can recognise a Radical SAM core domain in the interval 99–337 (EEGRGTLCVS…VTTVRKTRGD (239 aa)). Cysteine 106 and cysteine 343 form a disulfide bridge. The [4Fe-4S] cluster site is built by cysteine 113, cysteine 117, and cysteine 120. S-adenosyl-L-methionine is bound by residues 167–168 (GE), serine 199, 221–223 (SLH), and asparagine 300. Cysteine 343 acts as the S-methylcysteine intermediate in catalysis.

Belongs to the radical SAM superfamily. RlmN family. The cofactor is [4Fe-4S] cluster.

It localises to the cytoplasm. It carries out the reaction adenosine(2503) in 23S rRNA + 2 reduced [2Fe-2S]-[ferredoxin] + 2 S-adenosyl-L-methionine = 2-methyladenosine(2503) in 23S rRNA + 5'-deoxyadenosine + L-methionine + 2 oxidized [2Fe-2S]-[ferredoxin] + S-adenosyl-L-homocysteine. The catalysed reaction is adenosine(37) in tRNA + 2 reduced [2Fe-2S]-[ferredoxin] + 2 S-adenosyl-L-methionine = 2-methyladenosine(37) in tRNA + 5'-deoxyadenosine + L-methionine + 2 oxidized [2Fe-2S]-[ferredoxin] + S-adenosyl-L-homocysteine. In terms of biological role, specifically methylates position 2 of adenine 2503 in 23S rRNA and position 2 of adenine 37 in tRNAs. m2A2503 modification seems to play a crucial role in the proofreading step occurring at the peptidyl transferase center and thus would serve to optimize ribosomal fidelity. The polypeptide is Dual-specificity RNA methyltransferase RlmN (Francisella tularensis subsp. holarctica (strain FTNF002-00 / FTA)).